The sequence spans 190 residues: Putative manganese efflux pump MntP (190 aa).

The next 6 helical transmembrane spans lie at 5 to 25 (ALLA…VATG), 41 to 61 (WHFG…GQGI), 64 to 84 (FVDA…GLKM), 105 to 125 (TSLI…GVTL), 127 to 147 (MLGL…LGLT), and 169 to 189 (ILGG…SGVF).

Belongs to the MntP (TC 9.B.29) family.

It is found in the cell inner membrane. Functionally, probably functions as a manganese efflux pump. This chain is Putative manganese efflux pump MntP, found in Oleidesulfovibrio alaskensis (strain ATCC BAA-1058 / DSM 17464 / G20) (Desulfovibrio alaskensis).